We begin with the raw amino-acid sequence, 48 residues long: Large ribosomal subunit protein bL32 (48 aa).

A compositionally biased stretch (basic residues) spans 1 to 20 (MAVPKRRVSKTRAAKRRTHY). Positions 1–48 (MAVPKRRVSKTRAAKRRTHYKVSLPMPVKDKDGSYKMPHRANPTTKEY) are disordered.

The protein belongs to the bacterial ribosomal protein bL32 family.

This is Large ribosomal subunit protein bL32 from Campylobacter jejuni subsp. doylei (strain ATCC BAA-1458 / RM4099 / 269.97).